Here is a 208-residue protein sequence, read N- to C-terminus: FMN-dependent NADH:quinone oxidoreductase 1 (208 aa).

Residue Ser10 participates in FMN binding.

Belongs to the azoreductase type 1 family. As to quaternary structure, homodimer. FMN is required as a cofactor.

The enzyme catalyses 2 a quinone + NADH + H(+) = 2 a 1,4-benzosemiquinone + NAD(+). It catalyses the reaction N,N-dimethyl-1,4-phenylenediamine + anthranilate + 2 NAD(+) = 2-(4-dimethylaminophenyl)diazenylbenzoate + 2 NADH + 2 H(+). Quinone reductase that provides resistance to thiol-specific stress caused by electrophilic quinones. Contributes to resistance to 2-methylhydroquinone (2-MHQ) and catechol. Its function is as follows. Also exhibits azoreductase activity. Catalyzes the reductive cleavage of the azo bond in aromatic azo compounds to the corresponding amines. In Bacillus subtilis (strain 168), this protein is FMN-dependent NADH:quinone oxidoreductase 1.